The primary structure comprises 561 residues: MMETQFPWLTTIVLLPLLAALLIPFIPDQNGKTMRWYGLGVGAIDFALMCYVFWKYYNASDSGFQLVEKYLWLPQIGLSWAVSVDGLSMPLVLLAGLVTTLSIFAAWQVDYKPRLFYFLMLVLYSAQIGVFVAQDLMLLFIMWELELVPVYLLISIWGGKKRRYAATKFLLYTAAASIFILVAALGMALYGEGNTTFDMVELGLKDYPLAFELLLYLGLLITFGVKLAVFPLHTWLPDAHGEASAPVSMILAGVLLKMGGYGLIRLNLEMLSDAHVYFAPVLAILGVVNIVYGGLNSFGQSNMKRRLAYSSVAHMGFVLLGIASFTDLGISGALLQMISHGLIAAVLFFLAGVTYDRLHTLALDEMGGLGQVMPKIFALFTISAMASLALPGMSGFASELMVFVGVTSSDIYSSTFCTVTVFLAAVGLILTPIYLLSMLRQMFYSTGKAPVCLLKNTPYENEVLDEAICFGTNCVLPAKAVYTDAKPREVAIAACFLVLIIGIGLYPKIATRMYDAKIVAVNTQVRQSYTFAKADPQLFAKGFLFPRIPESEVLSVSGLLR.

14 helical membrane-spanning segments follow: residues 6 to 26 (FPWLTTIVLLPLLAALLIPFI), 36 to 56 (WYGLGVGAIDFALMCYVFWKY), 87 to 107 (LSMPLVLLAGLVTTLSIFAAW), 115 to 135 (LFYFLMLVLYSAQIGVFVAQD), 136 to 156 (LMLLFIMWELELVPVYLLISI), 169 to 189 (FLLYTAAASIFILVAALGMAL), 210 to 230 (AFELLLYLGLLITFGVKLAVF), 244 to 264 (SAPVSMILAGVLLKMGGYGLI), 275 to 295 (HVYFAPVLAILGVVNIVYGGL), 312 to 332 (VAHMGFVLLGIASFTDLGISG), 333 to 353 (ALLQMISHGLIAAVLFFLAGV), 376 to 396 (IFALFTISAMASLALPGMSGF), 419 to 439 (VTVFLAAVGLILTPIYLLSML), and 490 to 510 (VAIAACFLVLIIGIGLYPKIA).

The protein belongs to the complex I subunit 4 family.

The protein resides in the cellular thylakoid membrane. The enzyme catalyses a plastoquinone + NADH + (n+1) H(+)(in) = a plastoquinol + NAD(+) + n H(+)(out). It carries out the reaction a plastoquinone + NADPH + (n+1) H(+)(in) = a plastoquinol + NADP(+) + n H(+)(out). Its function is as follows. NDH-1 shuttles electrons from NAD(P)H, via FMN and iron-sulfur (Fe-S) centers, to quinones in the respiratory chain. The immediate electron acceptor for the enzyme in this species is believed to be plastoquinone. Couples the redox reaction to proton translocation (for every two electrons transferred, four hydrogen ions are translocated across the cytoplasmic membrane), and thus conserves the redox energy in a proton gradient. The sequence is that of NAD(P)H-quinone oxidoreductase chain 4 2 from Trichodesmium erythraeum (strain IMS101).